The primary structure comprises 429 residues: Cyclin-B2-3 (429 aa).

Residues 86–101 are compositionally biased toward basic and acidic residues; the sequence is ADHKPHIRDEETKKPD. Residues 86–109 form a disordered region; the sequence is ADHKPHIRDEETKKPDSVSSEEPE.

This sequence belongs to the cyclin family. Cyclin AB subfamily.

This is Cyclin-B2-3 (CYCB2-3) from Arabidopsis thaliana (Mouse-ear cress).